Here is a 556-residue protein sequence, read N- to C-terminus: Glucose-6-phosphate isomerase (556 aa).

Residue Glu360 is the Proton donor of the active site. Active-site residues include His391 and Lys519.

This sequence belongs to the GPI family.

The protein localises to the cytoplasm. The catalysed reaction is alpha-D-glucose 6-phosphate = beta-D-fructose 6-phosphate. It participates in carbohydrate biosynthesis; gluconeogenesis. Its pathway is carbohydrate degradation; glycolysis; D-glyceraldehyde 3-phosphate and glycerone phosphate from D-glucose: step 2/4. In terms of biological role, catalyzes the reversible isomerization of glucose-6-phosphate to fructose-6-phosphate. In Acinetobacter baumannii (strain ATCC 17978 / DSM 105126 / CIP 53.77 / LMG 1025 / NCDC KC755 / 5377), this protein is Glucose-6-phosphate isomerase.